Here is a 434-residue protein sequence, read N- to C-terminus: Protein phosphatase 2C 56 (434 aa).

One can recognise a PPM-type phosphatase domain in the interval 128-422; sequence LYGFTSICGR…DNISVVVVDL (295 aa). Mg(2+) is bound by residues D177, D261, S262, D347, and D413. A Nuclear localization signal motif is present at residues 423-427; the sequence is KPRRK.

The protein belongs to the PP2C family. In terms of assembly, interacts with SPK1, ATHB-6, CIPK15/PKS3, GPX3, SRK2E/OST1, SRK2D, SRK2I, SCAR1, SCAR2, SCAR3 and SCARL. Binds to the PA released by the phospholipase D alpha 1 (PLDALPHA1) in response to ABA during the stomatal closure regulation. Interacts with ABA-bounded PYR1, PYL1, PYL2, PYL3, PYL4, PYL5, PYL6, PYL7, PYL8, PYL9, PYL10, and with free PYL2, PYL3, PYL4 and PYL13. Binds to RPL12B, CPK21 and CPK23. Binds to MAPKKK18. Interacts with KIN10. Interacts with phosphorylated PYL8/RCAR3. Mg(2+) serves as cofactor. Mn(2+) is required as a cofactor. Expressed in seeds and seedlings. In roots, confined to lateral root caps and columella cells.

It localises to the nucleus. Its subcellular location is the cytoplasm. The protein resides in the cell membrane. It carries out the reaction O-phospho-L-seryl-[protein] + H2O = L-seryl-[protein] + phosphate. It catalyses the reaction O-phospho-L-threonyl-[protein] + H2O = L-threonyl-[protein] + phosphate. Phosphatase activity repressed by oxidized GPX3 and phosphatidic acid (PA). PA is produced by PLD alpha 1 in response to ABA. Repressed by PYR/PYL/RCAR ABA receptors in an ABA-dependent manner. Functionally, key component and repressor of the abscisic acid (ABA) signaling pathway that regulates numerous ABA responses, such as stomatal closure, osmotic water permeability of the plasma membrane (Pos), drought-induced resistance and rhizogenesis, response to glucose, high light stress, seed germination and inhibition of vegetative growth. During the stomatal closure regulation, modulates the inward calcium-channel permeability as well as the actin reorganization in guard cells in response to ABA. Involved in the resistance to the bacterial pathogen Pseudomonas syringae pv. tomato. Controls negatively fibrillin expression that is involved in mediating ABA-induced photoprotection. May be involved in ABA content regulation. Plays a role in the Pro accumulation in response to reduced water availability (low water potential). Required for the ABA negative regulation of the ethylene-induced hyponastic growth. Involved in acquired thermotolerance of root growth and seedling survival. Activates/represses SRK2E/OST1 in response to ABA-dependent stimuli, especially in stomata closure regulation involving SLAC1. Represses MAPKKK18 activity and promotes MAPKKK18 degradation by the proteasome pathway upon abscisic acid (ABA) treatment. Represses KIN10 activity by the specific dephosphorylation of its T-loop Thr-198, leading to a poststress inactivation of SnRK1 signaling. Restricts MAPKKK20 activity by dephosphorylation. This is Protein phosphatase 2C 56 from Arabidopsis thaliana (Mouse-ear cress).